A 924-amino-acid polypeptide reads, in one-letter code: Probable dipeptidyl-aminopeptidase B (924 aa).

The tract at residues 1–104 is disordered; the sequence is MPPFTYSDDT…DQRSPGDGQR (104 aa). The Cytoplasmic portion of the chain corresponds to 1-111; that stretch reads MPPFTYSDDT…GQRMDRSLRR (111 aa). Residues 9–23 are compositionally biased toward basic and acidic residues; the sequence is DTLRSGRDRFRDHSP. Positions 31-43 are enriched in polar residues; sequence SQETDSSASTTSI. 2 stretches are compositionally biased toward basic and acidic residues: residues 47-58 and 92-104; these read RIQERLDTKEFT and SRSD…DGQR. The chain crosses the membrane as a helical; Signal-anchor for type II membrane protein span at residues 112–132; the sequence is WLFIVSGVLVATWVIGLFVFV. Residues 133–924 lie on the Vacuolar side of the membrane; that stretch reads SSKAYKPSSS…GMKKRAAPTA (792 aa). N-linked (GlcNAc...) asparagine glycosylation is found at N231 and N364. The active-site Charge relay system is S768. N827 carries N-linked (GlcNAc...) asparagine glycosylation. Catalysis depends on charge relay system residues D845 and H878.

It belongs to the peptidase S9B family.

It is found in the vacuole membrane. The enzyme catalyses Release of an N-terminal dipeptide, Xaa-Yaa-|-Zaa-, from a polypeptide, preferentially when Yaa is Pro, provided Zaa is neither Pro nor hydroxyproline.. In terms of biological role, type IV dipeptidyl-peptidase which removes N-terminal dipeptides sequentially from polypeptides having unsubstituted N-termini provided that the penultimate residue is proline. The chain is Probable dipeptidyl-aminopeptidase B (DAPB) from Sordaria macrospora (strain ATCC MYA-333 / DSM 997 / K(L3346) / K-hell).